The primary structure comprises 246 residues: DNA repair protein RecO (246 aa).

It belongs to the RecO family.

Involved in DNA repair and RecF pathway recombination. In Methylorubrum extorquens (strain CM4 / NCIMB 13688) (Methylobacterium extorquens), this protein is DNA repair protein RecO.